Reading from the N-terminus, the 1435-residue chain is MAYDEDDGEINFNELVGNLLSSHNQEGQEEGEVQGGEQEGDDFEKIYPTSENIEPKHPDDSQHMHNSPDQNIEIPHFVDEEDELVSVVANAVQNIDDEQAKPENHLENGSEHVTSDTADDNHEKEQQQEWAHILQQEILKSDGEPLRENTERRVSTSQHHPSQRTDDALDQDDENLRMAILESLQELNTNEEEEKEPEKHEHAAPNDKLSSKKSSKKKKKDKSKNRESSKDKSSKKSKSSSHSKKHAKDRNKEKQSKPTNNENTLDLSNILENLIHENDNAAIDTAKQTVDIQDNSHTDNTNNEDVEAQALVEATLKAFENELLSSAPTEEPSQEQSIGPVSSRKAVEPPRKPTADDIPLAMLQAFKPKKRPPQEKKKTKSKTSKAASTANKSPASESTSKKKKKKKTVKESNKSQEAYEDDEFSRILADMVNQVVNTSLKETSTHTATQDNKLESESDFTSPVQSQYTTEDASTANDDSLDLNQIMQNAMAMVFQNQNDDEFDENIVEDFNRGLGDLSVSDLLPHDNLSRMEKKSVPKSSSKSEKKTAISRRASKKASRDASSVELTEVPSKPKKPSKTEVSLEKKLRKKYVSIANEAASVARKKRWAKNKELKEKEKLERQTAREERRHKKKLEKQRLAEEQEELKKIVERGPPYPPDLRLTKSGKPKKPYRRWTPEELLKRSQEAEKPRKVKKERKKKEKKMKVPSSALKKIPLFNFVKGNVQPSARHRLNDIEGSLSTIGLHKSPDGVRRILSRPKSEDHEWPLSDSSASQNYDAHLKTVVHKEKIPFHPPWTIPSQPPFALPVARRKKIPNIKKYRKRTNNSFRVSKEGTASTRNRILPAILLPIINTLKAAAKSQTAAGATPEEARKRLATIIQHAKSTVIRAALQARKNSMQAAHSKGTTTELATTASRMKNPLKMIPIFNTSRVKQQLDKQLPARSAGTEISSSESPDKATPDPHSNSTIAGHTLKGVTTPIKIEDSDANVPPVSIAVSTIEPSQDKLELTKRAESVEPVENNVETAKETQSVQEIKENVGTKASEEVTLTEDKTNGDPKNEKRILIESPVEKTDKKKPGEKIATDLNEDASLSDKKDGDEKSTLHSDAAQLTGNEPDSVNTTTGKPKLIDVSLKPLNEAKPKIPIIFPLKRPQIKPEVSVINLVQNLVNTKIPEIKNESVDLGSNITDILSSTITNILPEITATDVKNYQYEDENVKYLKKTPRQVLNLDGLVPPSGRCITKAKRVRRIKKLSADATTAPEADGKANSESITYTFDIPSPEEVQSKRSVVLKFAKARLTEAELSCLKKEINNVRKRRWREMNSTKNWEYDVKSRLKKRANAFFGEGESETKSKWIEERFQEKVSQEKYKDRLETTETQANNTKIVIDDKEILNILAVNMNNLNKARCIEKDIQESFREEKLASLQPKKKRKKSILH.

Disordered stretches follow at residues valine 16 to isoleucine 74, valine 88 to leucine 265, alanine 286 to glutamine 309, glutamate 322 to phenylalanine 424, glutamate 442 to aspartate 482, serine 519 to proline 708, and glutamine 934 to threonine 972. Residues glycine 27–aspartate 42 are compositionally biased toward acidic residues. Composition is skewed to basic and acidic residues over residues isoleucine 53–histidine 63, glutamate 98–glutamine 127, and leucine 139–valine 154. One can recognise a UIM domain in the interval glutamine 171–asparagine 190. Over residues glutamate 196–proline 205 the composition is skewed to basic and acidic residues. The span at serine 211 to serine 223 shows a compositional bias: basic residues. The span at lysine 224–serine 234 shows a compositional bias: basic and acidic residues. Residues lysine 235–aspartate 249 show a composition bias toward basic residues. A compositionally biased stretch (polar residues) spans alanine 286 to threonine 301. The segment covering lysine 345–alanine 355 has biased composition (basic and acidic residues). A compositionally biased stretch (basic residues) spans lysine 367–threonine 383. A compositionally biased stretch (low complexity) spans serine 384–serine 398. Polar residues-rich tracts occupy residues glutamate 442–aspartate 451 and aspartate 459–aspartate 482. Composition is skewed to basic and acidic residues over residues leucine 524–threonine 548, lysine 610–glutamate 628, and lysine 637–glutamate 652. Residues lysine 665–arginine 674 are compositionally biased toward basic residues. Residues tryptophan 676 to proline 691 show a composition bias toward basic and acidic residues. A Nuclear localization signal motif is present at residues lysine 683–lysine 699. The span at arginine 692 to lysine 706 shows a compositional bias: basic residues. Lysine 981 participates in a covalent cross-link: Glycyl lysine isopeptide (Lys-Gly) (interchain with G-Cter in SUMO). Basic and acidic residues predominate over residues lysine 1005–serine 1014. Residues lysine 1005 to proline 1125 form a disordered region. Residue serine 1014 is modified to Phosphoserine. Polar residues predominate over residues asparagine 1021–glutamine 1032. Basic and acidic residues-rich tracts occupy residues glutamate 1033–alanine 1082 and leucine 1091–leucine 1103. The residue at position 1067 (serine 1067) is a Phosphoserine. A compositionally biased stretch (polar residues) spans alanine 1108–glycine 1123. Lysine 1154 is covalently cross-linked (Glycyl lysine isopeptide (Lys-Gly) (interchain with G-Cter in SUMO)).

As to quaternary structure, interacts with PRP8 and RAP1.

The protein localises to the nucleus. Negative regulator of PRP3 and PRP4 genes. In Saccharomyces cerevisiae (strain ATCC 204508 / S288c) (Baker's yeast), this protein is Protein SPP41 (SPP41).